We begin with the raw amino-acid sequence, 322 residues long: AB hydrolase superfamily protein FGSG_00044 (322 aa).

Residues 36–319 (RTTPKQPVAI…ITAEVRRIVK (284 aa)) enclose the AB hydrolase-1 domain.

This sequence belongs to the AB hydrolase superfamily.

The protein operates within mycotoxin biosynthesis. In terms of biological role, AB hydrolase superfamily protein; part of the gene cluster that mediates the biosynthesis of gramillins A and B, bicyclic lipopeptides that induce cell death in maize leaves but not in wheat leaves. The nonribosomal peptide synthetase GRA1 incorporates respectively a glutamic adic (Glu), a leucine (Leu), a serine (Ser), a hydroxyglutamine (HOGln), a 2-amino decanoic acid, and 2 cysteins (CysB and CysA). The biosynthesis of 2-amino decanoic acid incorporated in gramillins could be initiated by a fatty acid synthase composed of the alpha and beta subunits FGSG_00036 and FGSG_11656. The cytochrome P450 monooxygenase FGSG_15680 could hydroxylate the fatty acid chain. Subsequent oxidation to the ketone by the oxidoreductase FGSG_00048 and transamination by aminotransferase FGSG_00049 could form 2-amino-decanoic acid. On the other hand, FGSG_15680 could also be responsible for the HO-modified glutamine at the gamma-position. Whether hydroxylation occurs on the fully assembled product or on the Gln residue prior to assembly into the gramillins requires further proof. The thioredoxin FGSG_00043 could also be required for the disulfide-bond formation between CysA and CysB. The specific involvement of the remaining proteins from the cluster is more difficult to discern, but could have broader regulatory (FGSG_00040 and FGSG_11657) or enzymatic functions (FGSG_00044 and FGSG_00045). The final C-domain of GRA1 does not possess the expected sequence of a termination CT domain, often implicated in macrocyclization and release of a cyclopeptidein fungal NRPs; and the thioesterase FGSG_00047 may act in concert with the terminal C-domain of GRA1 to catalyze the formation of the macrocyclic anhydride and release of the products. The chain is AB hydrolase superfamily protein FGSG_00044 from Gibberella zeae (strain ATCC MYA-4620 / CBS 123657 / FGSC 9075 / NRRL 31084 / PH-1) (Wheat head blight fungus).